The sequence spans 314 residues: Olfactory receptor 5G3 (314 aa).

Residues 1–24 lie on the Extracellular side of the membrane; it reads MEDKNQTVVTEFLLLGLTDHPYQK. A glycan (N-linked (GlcNAc...) asparagine) is linked at Asn-5. Residues 25–45 traverse the membrane as a helical segment; that stretch reads IVLFFMFLFVYLITLGGNLGM. Topologically, residues 46 to 97 are cytoplasmic; it reads ITLIWIDPRLHTPMYFFLRHLSFVDICSSSSVVPKMLCNIFAEKKDITFLGC. Cys-97 and Cys-179 are joined by a disulfide. A helical membrane pass occupies residues 98-118; sequence AAQMWFFGLFEAAECFLLAAM. Topologically, residues 119–143 are extracellular; the sequence is AYDRYVAICKPLLYTLIMSQQVCMQ. A helical transmembrane segment spans residues 144–164; the sequence is LVVGPYAMALISTMTHTIFTF. The Cytoplasmic portion of the chain corresponds to 165–167; sequence CLP. A helical transmembrane segment spans residues 168 to 188; that stretch reads FCGSNIINHFFCDIFPLLSLA. Residues 189–196 lie on the Extracellular side of the membrane; that stretch reads CADTWVNK. The helical transmembrane segment at 197 to 217 threads the bilayer; that stretch reads FVLFVLAGAIGVLSGLIIMVS. The Cytoplasmic segment spans residues 218–237; that stretch reads YICILMTILKIQTADGKQKA. Residues 238–258 traverse the membrane as a helical segment; it reads FFTCFSHLAAVSILYGTLFLI. At 259 to 268 the chain is on the extracellular side; sequence YVRPSSSSSL. Residues 269–289 traverse the membrane as a helical segment; sequence GIYKVISLFYTVVIPMVNPLI. At 290-314 the chain is on the cytoplasmic side; it reads YSLRNKEVKDAFRRKIERKKFIIGR.

The protein belongs to the G-protein coupled receptor 1 family.

The protein localises to the cell membrane. Its function is as follows. Odorant receptor. This Homo sapiens (Human) protein is Olfactory receptor 5G3 (OR5G3).